The sequence spans 234 residues: Large ribosomal subunit protein uL1 (234 aa).

The protein belongs to the universal ribosomal protein uL1 family. In terms of assembly, part of the 50S ribosomal subunit.

Functionally, binds directly to 23S rRNA. The L1 stalk is quite mobile in the ribosome, and is involved in E site tRNA release. Its function is as follows. Protein L1 is also a translational repressor protein, it controls the translation of the L11 operon by binding to its mRNA. In Campylobacter fetus subsp. fetus (strain 82-40), this protein is Large ribosomal subunit protein uL1.